Here is a 261-residue protein sequence, read N- to C-terminus: RING finger and CHY zinc finger domain-containing protein 1 (261 aa).

A CHY-type zinc finger spans residues 13–80; that stretch reads LAQGPRGCEH…AQQTCEDCST (68 aa). 24 residues coordinate Zn(2+): Cys-20, His-22, Cys-33, Cys-34, Cys-40, Cys-43, His-44, His-50, Cys-62, Cys-65, Cys-75, Cys-78, Cys-87, Cys-90, His-101, Cys-102, Cys-105, Cys-108, His-118, Cys-119, Cys-122, Cys-125, His-134, and Cys-136. Residues 82-144 form a CTCHY-type zinc finger; sequence FGEYYCSICH…KCIENVSRQN (63 aa). An RING-type zinc finger spans residues 145–189; that stretch reads CPICLEDIHTSRVVAHVLPCGHLLHRTCYEEMLKEGYRCPLCMHS.

In terms of assembly, monomer and homodimer. Interacts with AR, MDM2, KAT5, PLAG1, PLAGL2, COPE, UBE2D2 and GORAB/NTKLBP1. Subject to ubiquitination and proteasomal degradation. Interaction with PLAGL2 or KAT5 enhances protein stability. As to expression, detected in testis, liver, kidney and heart.

Its subcellular location is the nucleus. It is found in the nucleus speckle. The protein resides in the cytoplasm. It carries out the reaction S-ubiquitinyl-[E2 ubiquitin-conjugating enzyme]-L-cysteine + [acceptor protein]-L-lysine = [E2 ubiquitin-conjugating enzyme]-L-cysteine + N(6)-ubiquitinyl-[acceptor protein]-L-lysine.. Its pathway is protein modification; protein ubiquitination. Functionally, E3 ubiquitin-protein ligase that mediates ubiquitination of target proteins, including p53/TP53, TP73, HDAC1 and CDKN1B. Mediates ubiquitination and degradation of p53/TP53; preferentially acts on tetrameric p53/TP53. Catalyzes monoubiquitinates the translesion DNA polymerase POLH. Involved in the ribosome-associated quality control (RQC) pathway, which mediates the extraction of incompletely synthesized nascent chains from stalled ribosomes: RCHY1 acts downstream of NEMF and recognizes CAT tails associated with stalled nascent chains, leading to their ubiquitination and degradation. The polypeptide is RING finger and CHY zinc finger domain-containing protein 1 (Rchy1) (Mus musculus (Mouse)).